Consider the following 639-residue polypeptide: 2-oxoacid:ferredoxin oxidoreductase 1, subunit alpha (639 aa).

The YPITP motif motif lies at 266-270 (YPITP). Positions 269 and 352 each coordinate substrate.

As to quaternary structure, heterodimer composed of an alpha and a beta subunit.

It carries out the reaction a 2-oxocarboxylate + 2 oxidized [2Fe-2S]-[ferredoxin] + CoA = an acyl-CoA + 2 reduced [2Fe-2S]-[ferredoxin] + CO2 + H(+). Functionally, catalyzes the coenzyme A-dependent oxidative decarboxylation of different 2-oxoacids such as pyruvate, 2-oxobutyrate and glyoxylate to form their CoA derivatives. This is 2-oxoacid:ferredoxin oxidoreductase 1, subunit alpha from Aeropyrum pernix (strain ATCC 700893 / DSM 11879 / JCM 9820 / NBRC 100138 / K1).